The following is a 226-amino-acid chain: MTLLILLRHGQSVWNQKNLFTGWVDIPLSQQGIQEAIAAGESIKHLPIDCIFTSTLVRSLMTALLAMTNHSSQKVPYIVHEERPDMSRIHSQKEMEQMIPLFQSSALNERMYGELQGKNKQEVAVQFGEEQVKLWRRSYRIAPPQGESLFDTGQRTLPYFQERIFPLLQQGKNIFISAHGNSLRSLIMDLEKLSEEQVLSLELPTGQPIVYEWTGQKFTKHAPSLG.

Substrate contacts are provided by residues 8–15, 21–22, Arg58, 109–112, Lys120, 136–137, and 180–181; these read RHGQSVWN, TG, ERMY, RR, and GN. His9 functions as the Tele-phosphohistidine intermediate in the catalytic mechanism. Glu109 (proton donor/acceptor) is an active-site residue.

Belongs to the phosphoglycerate mutase family. BPG-dependent PGAM subfamily.

The enzyme catalyses (2R)-2-phosphoglycerate = (2R)-3-phosphoglycerate. It functions in the pathway carbohydrate degradation; glycolysis; pyruvate from D-glyceraldehyde 3-phosphate: step 3/5. In terms of biological role, catalyzes the interconversion of 2-phosphoglycerate and 3-phosphoglycerate. The polypeptide is 2,3-bisphosphoglycerate-dependent phosphoglycerate mutase (Chlamydia trachomatis serovar L2 (strain ATCC VR-902B / DSM 19102 / 434/Bu)).